The sequence spans 349 residues: UPF0324 inner membrane protein YeiH (349 aa).

At 1–12 (MTNITLQKQHRT) the chain is on the periplasmic side. A helical transmembrane segment spans residues 13–32 (LWHFIPGLALSAVITGVALW). Over 33-35 (GGS) the chain is Cytoplasmic. A helical transmembrane segment spans residues 36–58 (IPAVAGAGFSALTLAILLGMVLG). Topologically, residues 59–99 (NTIYPHIWKSCDGGVLFAKQYLLRLGIILYGFRLTFSQIAD) are periplasmic. A helical transmembrane segment spans residues 100 to 122 (VGISGIIIDVLTLSSTFLLACFL). Topologically, residues 123-131 (GQKVFGLDK) are cytoplasmic. The helical transmembrane segment at 132 to 151 (HTSWLIGAGSSICGAAAVLA) threads the bilayer. At 152–162 (TEPVVKAEASK) the chain is on the periplasmic side. The helical transmembrane segment at 163–185 (VTVAVATVVIFGTVAIFLYPAIY) threads the bilayer. At 186 to 261 (PLMSQWFSPE…SGTNSGEKSK (76 aa)) the chain is on the cytoplasmic side. A helical membrane pass occupies residues 262-283 (ITIPWFAILFIVVAIFNSFHLL). Over 284–289 (PQSVVN) the chain is Periplasmic. Residues 290 to 312 (MLVTLDTFLLAMAMAALGLTTHV) form a helical membrane-spanning segment. Residues 313–321 (SALKKAGAK) lie on the Cytoplasmic side of the membrane. A helical transmembrane segment spans residues 322-344 (PLLMALVLFAWLIVGGGAINYVI). Residues 345–349 (QSVIA) lie on the Periplasmic side of the membrane.

Belongs to the UPF0324 family.

The protein resides in the cell inner membrane. The protein is UPF0324 inner membrane protein YeiH (yeiH) of Escherichia coli O6:H1 (strain CFT073 / ATCC 700928 / UPEC).